A 413-amino-acid polypeptide reads, in one-letter code: Arginine biosynthesis bifunctional protein ArgJ (413 aa).

Substrate is bound by residues T158, K184, T195, E285, N408, and S413. Residue T195 is the Nucleophile of the active site.

Belongs to the ArgJ family. As to quaternary structure, heterotetramer of two alpha and two beta chains.

The protein resides in the cytoplasm. It catalyses the reaction N(2)-acetyl-L-ornithine + L-glutamate = N-acetyl-L-glutamate + L-ornithine. The enzyme catalyses L-glutamate + acetyl-CoA = N-acetyl-L-glutamate + CoA + H(+). It functions in the pathway amino-acid biosynthesis; L-arginine biosynthesis; L-ornithine and N-acetyl-L-glutamate from L-glutamate and N(2)-acetyl-L-ornithine (cyclic): step 1/1. It participates in amino-acid biosynthesis; L-arginine biosynthesis; N(2)-acetyl-L-ornithine from L-glutamate: step 1/4. Catalyzes two activities which are involved in the cyclic version of arginine biosynthesis: the synthesis of N-acetylglutamate from glutamate and acetyl-CoA as the acetyl donor, and of ornithine by transacetylation between N(2)-acetylornithine and glutamate. The chain is Arginine biosynthesis bifunctional protein ArgJ from Rhizobium meliloti (strain 1021) (Ensifer meliloti).